An 83-amino-acid polypeptide reads, in one-letter code: Putative beta-neurotoxin RjAa15f (83 aa).

The first 18 residues, 1–18 (MKILIFIIASFMLIGVEC), serve as a signal peptide directing secretion. The 64-residue stretch at 19 to 82 (KEGYPMGRNG…VWDSSNNKCV (64 aa)) folds into the LCN-type CS-alpha/beta domain. Cystine bridges form between Cys29–Cys81, Cys33–Cys55, Cys40–Cys62, and Cys44–Cys64.

Belongs to the long (4 C-C) scorpion toxin superfamily. Sodium channel inhibitor family. Beta subfamily. Expressed by the venom gland.

Its subcellular location is the secreted. Beta toxins bind voltage-independently at site-4 of sodium channels (Nav) and shift the voltage of activation toward more negative potentials thereby affecting sodium channel activation and promoting spontaneous and repetitive firing. The polypeptide is Putative beta-neurotoxin RjAa15f (Rhopalurus junceus (Caribbean blue scorpion)).